The following is a 1582-amino-acid chain: MPLAFCGTENHSAAYRVDQGVLNNGCFVDALNVVPHVFLLFITFPILFIGWGSQSSKVHIHHSTWLHFPGHNLRWILTFILLFVLVCEIAEGILSDGVTESRHLHLYMPAGMAFMAAITSVVYYHNIETSNFPKLLIALLIYWTLAFITKTIKFVKFYDHAIGFSQLRFCLTGLLVILYGMLLLVEVNVIRVRRYVFFKTPREVKPPEDLQDLGVRFLQPFVNLLSKGTYWWMNAFIKTAHKKPIDLRAIGKLPIAMRALTNYQRLCLAFDAQARKDTQSQQGARAIWRALCHAFGRRLVLSSTFRILADLLGFAGPLCIFGIVDHLGKENHVFQPKTQFLGVYFVSSQEFLGNAYVLAVLLFLALLLQRTFLQASYYVAIETGINLRGAIQTKIYNKIMHLSTSNLSMGEMTAGQICNLVAIDTNQLMWFFFLCPNLWAMPVQIIVGVILLYYILGVSALIGAAVIILLAPVQYFVATKLSQAQRSTLEYSNERLKQTNEMLRGIKLLKLYAWENIFCSRVEKTRRKEMTSLRAFAVYTSISIFMNTAIPIAAVLITFVGHVSFFKESDFSPSVAFASLSLFHILVTPLFLLSSVVRSTVKALVSVQKLSEFLSSAEIREEQCAPREPAPQGQAGKYQAVPLKVVNRKRPAREEVRDLLGPLQRLTPSTDGDADNFCVQIIGGFFTWTPDGIPTLSNITIRIPRGQLTMIVGQVGCGKSSLLLATLGEMQKVSGAVFWNSSLPDSEGEDPSNPERETAADSDARSRGPVAYASQKPWLLNATVEENITFESPFNKQRYKMVIEACSLQPDIDILPHGDQTQIGERGINLSGGQRQRISVARALYQHTNVVFLDDPFSALDVHLSDHLMQAGILELLRDDKRTVVLVTHKLQYLPHADWIIAMKDGTIQREGTLKDFQRSECQLFEHWKTLMNRQDQELEKETVMERKAPEPSQGLPRAMSSRDGLLLDEDEEEEEAAESEEDDNLSSVLHQRAKIPWRACTKYLSSAGILLLSLLVFSQLLKHMVLVAIDYWLAKWTDSALVLSPAARNCSLSQECALDQSVYAMVFTVLCSLGIALCLVTSVTVEWTGLKVAKRLHRSLLNRIILAPMRFFETTPLGSILNRFSSDCNTIDQHIPSTLECLSRSTLLCVSALAVISYVTPVFLVALLPLAVVCYFIQKYFRVASRDLQQLDDTTQLPLLSHFAETVEGLTTIRAFRYEARFQQKLLEYTDSNNIASLFLTAANRWLEVRMEYIGACVVLIAAATSISNSLHRELSAGLVGLGLTYALMVSNYLNWMVRNLADMEIQLGAVKRIHTLLKTEAESYEGLLAPSLIPKNWPDQGKIQIQNLSVRYDSSLKPVLKHVNALISPGQKIGICGRTGSGKSSFSLAFFRMVDMFEGRIIIDGIDIAKLPLHTLRSRLSIILQDPVLFSGTIRFNLDPEKKCSDSTLWEALEIAQLKLVVKALPGGLDAIITEGGENFSQGQRQLFCLARAFVRKTSIFIMDEATASIDMATENILQKVVMTAFADRTVVTIAHRVHTILSADLVMVLKRGAILEFDKPEKLLSQKDSVFASFVRADK.

Residues 1–30 are Extracellular-facing; the sequence is MPLAFCGTENHSAAYRVDQGVLNNGCFVDA. Cys6 and Cys26 are disulfide-bonded. N-linked (GlcNAc...) asparagine glycosylation is present at Asn10. Residues 31-47 form a helical membrane-spanning segment; the sequence is LNVVPHVFLLFITFPIL. Residues 48 to 72 lie on the Cytoplasmic side of the membrane; it reads FIGWGSQSSKVHIHHSTWLHFPGHN. Residues 73–89 form a helical membrane-spanning segment; the sequence is LRWILTFILLFVLVCEI. At 90–106 the chain is on the extracellular side; the sequence is AEGILSDGVTESRHLHL. A helical transmembrane segment spans residues 107–123; the sequence is YMPAGMAFMAAITSVVY. Residues 124–136 are Cytoplasmic-facing; the sequence is YHNIETSNFPKLL. The chain crosses the membrane as a helical span at residues 137–153; the sequence is IALLIYWTLAFITKTIK. Residues 154 to 169 lie on the Extracellular side of the membrane; sequence FVKFYDHAIGFSQLRF. Residues 170–186 form a helical membrane-spanning segment; the sequence is CLTGLLVILYGMLLLVE. At 187 to 303 the chain is on the cytoplasmic side; it reads VNVIRVRRYV…AFGRRLVLSS (117 aa). Residues 299–602 form the ABC transmembrane type-1 1 domain; that stretch reads LVLSSTFRIL…LSSVVRSTVK (304 aa). The helical transmembrane segment at 304-319 threads the bilayer; sequence TFRILADLLGFAGPLC. The Extracellular portion of the chain corresponds to 320–356; it reads IFGIVDHLGKENHVFQPKTQFLGVYFVSSQEFLGNAY. Residues 357-372 traverse the membrane as a helical segment; the sequence is VLAVLLFLALLLQRTF. The Cytoplasmic portion of the chain corresponds to 373-438; that stretch reads LQASYYVAIE…MWFFFLCPNL (66 aa). Residues 439-454 form a helical membrane-spanning segment; sequence WAMPVQIIVGVILLYY. Residues 455-460 are Extracellular-facing; that stretch reads ILGVSA. A helical membrane pass occupies residues 461-473; it reads LIGAAVIILLAPV. At 474 to 541 the chain is on the cytoplasmic side; sequence QYFVATKLSQ…SLRAFAVYTS (68 aa). Residues 542-557 form a helical membrane-spanning segment; that stretch reads ISIFMNTAIPIAAVLI. Topologically, residues 558-576 are extracellular; sequence TFVGHVSFFKESDFSPSVA. Residues 577–592 traverse the membrane as a helical segment; it reads FASLSLFHILVTPLFL. Topologically, residues 593–1013 are cytoplasmic; sequence LSSVVRSTVK…YLSSAGILLL (421 aa). Residues 679–930 form the ABC transporter 1 domain; that stretch reads VQIIGGFFTW…ECQLFEHWKT (252 aa). Positions 688, 716, 720, and 721 each coordinate ATP. Ser720 is a binding site for Mg(2+). The disordered stretch occupies residues 741–768; sequence SSLPDSEGEDPSNPERETAADSDARSRG. A compositionally biased stretch (basic and acidic residues) spans 753 to 766; sequence NPERETAADSDARS. Gln775 contributes to the Mg(2+) binding site. The span at 939 to 950 shows a compositional bias: basic and acidic residues; it reads LEKETVMERKAP. Positions 939–962 are disordered; sequence LEKETVMERKAPEPSQGLPRAMSS. One can recognise an ABC transmembrane type-1 2 domain in the interval 1013–1307; it reads LSLLVFSQLL…MVRNLADMEI (295 aa). The helical transmembrane segment at 1014-1031 threads the bilayer; sequence SLLVFSQLLKHMVLVAID. Topologically, residues 1032–1067 are extracellular; it reads YWLAKWTDSALVLSPAARNCSLSQECALDQSVYAMV. Asn1050 is a glycosylation site (N-linked (GlcNAc...) asparagine). A helical membrane pass occupies residues 1068–1084; it reads FTVLCSLGIALCLVTSV. Residues 1085 to 1143 are Cytoplasmic-facing; it reads TVEWTGLKVAKRLHRSLLNRIILAPMRFFETTPLGSILNRFSSDCNTIDQHIPSTLECL. The chain crosses the membrane as a helical span at residues 1144–1161; sequence SRSTLLCVSALAVISYVT. Pro1162 is a topological domain (extracellular). A helical transmembrane segment spans residues 1163–1175; sequence VFLVALLPLAVVC. Residues 1176–1249 are Cytoplasmic-facing; that stretch reads YFIQKYFRVA…FLTAANRWLE (74 aa). Residues 1250–1265 form a helical membrane-spanning segment; that stretch reads VRMEYIGACVVLIAAA. Residues 1266-1281 lie on the Extracellular side of the membrane; that stretch reads TSISNSLHRELSAGLV. Residues 1282-1297 form a helical membrane-spanning segment; sequence GLGLTYALMVSNYLNW. At 1298–1582 the chain is on the cytoplasmic side; the sequence is MVRNLADMEI…VFASFVRADK (285 aa). The region spanning 1345 to 1579 is the ABC transporter 2 domain; sequence IQIQNLSVRY…KDSVFASFVR (235 aa). Residues Thr1381, Gly1382, Gly1384, Lys1385, Ser1386, and Ser1387 each contribute to the ADP site. ATP is bound at residue Ser1483.

Belongs to the ABC transporter superfamily. ABCC family. Conjugate transporter (TC 3.A.1.208) subfamily. As to quaternary structure, forms an heterooctamer with KCNJ11; four ABCC8/SUR1 molecules interact with one KCNJ11 homotetramer.

It localises to the cell membrane. Its activity is regulated as follows. KATP channels are regulated by cytoplasmic ATP/ADP ratios; ATP inhibits the channel by closing the pore, while ADP activates the channel. Activated by phosphatidylinositol 4,5-biphosphate (PtdIns(4,5)P2). Regulator subunit of pancreatic ATP-sensitive potassium channel (KATP), playing a major role in the regulation of insulin release. In pancreatic cells, it forms KATP channels with KCNJ11; KCNJ11 forms the channel pore while ABCC8 is required for activation and regulation. This Rattus norvegicus (Rat) protein is ATP-binding cassette sub-family C member 8 (Abcc8).